The chain runs to 158 residues: Cyclic pyranopterin monophosphate synthase (158 aa).

Residues 75–77 (LCH) and 113–114 (ME) each bind substrate. The active site involves D128.

Belongs to the MoaC family. As to quaternary structure, homohexamer; trimer of dimers.

The catalysed reaction is (8S)-3',8-cyclo-7,8-dihydroguanosine 5'-triphosphate = cyclic pyranopterin phosphate + diphosphate. Its pathway is cofactor biosynthesis; molybdopterin biosynthesis. Its function is as follows. Catalyzes the conversion of (8S)-3',8-cyclo-7,8-dihydroguanosine 5'-triphosphate to cyclic pyranopterin monophosphate (cPMP). This is Cyclic pyranopterin monophosphate synthase from Vibrio campbellii (strain ATCC BAA-1116).